The sequence spans 233 residues: Large ribosomal subunit protein uL1 (233 aa).

Belongs to the universal ribosomal protein uL1 family. Part of the 50S ribosomal subunit.

Binds directly to 23S rRNA. The L1 stalk is quite mobile in the ribosome, and is involved in E site tRNA release. In terms of biological role, protein L1 is also a translational repressor protein, it controls the translation of the L11 operon by binding to its mRNA. The chain is Large ribosomal subunit protein uL1 from Geotalea uraniireducens (strain Rf4) (Geobacter uraniireducens).